A 37-amino-acid chain; its full sequence is Large ribosomal subunit protein bL36 (37 aa).

Belongs to the bacterial ribosomal protein bL36 family.

The polypeptide is Large ribosomal subunit protein bL36 (Mesomycoplasma hyopneumoniae (strain 7448) (Mycoplasma hyopneumoniae)).